Consider the following 612-residue polypeptide: Protein hinderin (612 aa).

Ser20 carries the phosphoserine modification. A coiled-coil region spans residues 90-166 (LKDLCLEDKR…CQELLSLYQK (77 aa)). Phosphoserine is present on Ser178. A coiled-coil region spans residues 362–406 (IEKQLSEDRRQQLMLQKMELEIEKERLQHLLAQQETKLLLKQQQL). Polar residues predominate over residues 462–477 (STSFKKCPDSPNSGQN). 2 disordered regions span residues 462 to 484 (STSF…KKTV) and 509 to 598 (ETVT…RSPE). Phosphoserine is present on residues Ser471, Ser527, and Ser558. Polar residues-rich tracts occupy residues 555–568 (QSLS…SQPH) and 575–585 (TWSTLRPTPQK).

In terms of assembly, interacts (via N- and C-terminal domains) with SMC3 (via central hinge region).

In terms of biological role, competes with SMC1 for binding to SMC3. May affect the availability of SMC3 to engage in the formation of multimeric protein complexes. In Mus musculus (Mouse), this protein is Protein hinderin (Kiaa1328).